The primary structure comprises 87 residues: Phosphoribosyl-ATP pyrophosphatase (87 aa).

The protein belongs to the PRA-PH family.

The protein resides in the cytoplasm. It catalyses the reaction 1-(5-phospho-beta-D-ribosyl)-ATP + H2O = 1-(5-phospho-beta-D-ribosyl)-5'-AMP + diphosphate + H(+). Its pathway is amino-acid biosynthesis; L-histidine biosynthesis; L-histidine from 5-phospho-alpha-D-ribose 1-diphosphate: step 2/9. The polypeptide is Phosphoribosyl-ATP pyrophosphatase (Corynebacterium diphtheriae (strain ATCC 700971 / NCTC 13129 / Biotype gravis)).